The following is a 361-amino-acid chain: Peptide chain release factor 1 (361 aa).

An N5-methylglutamine modification is found at glutamine 235.

This sequence belongs to the prokaryotic/mitochondrial release factor family. Post-translationally, methylated by PrmC. Methylation increases the termination efficiency of RF1.

The protein localises to the cytoplasm. In terms of biological role, peptide chain release factor 1 directs the termination of translation in response to the peptide chain termination codons UAG and UAA. This is Peptide chain release factor 1 from Xanthomonas oryzae pv. oryzae (strain MAFF 311018).